We begin with the raw amino-acid sequence, 1778 residues long: Internalin I (1778 aa).

Positions 1–28 are cleaved as a signal peptide; that stretch reads MKKKFSIVIISVLLLGYLAPFDTLLVGA. Residues 36 to 101 are disordered; it reads DTAVKTAEAD…NIKTEINTDK (66 aa). Residues 51 to 62 show a composition bias toward acidic residues; the sequence is IESETGSDDETA. A compositionally biased stretch (basic and acidic residues) spans 63 to 88; sequence EEPKEAKEAEASKETTEKEEKAKTEE. 27 LRR repeats span residues 155 to 179, 183 to 204, 205 to 227, 228 to 250, 251 to 272, 277 to 298, 299 to 321, 322 to 344, 345 to 367, 368 to 389, 390 to 412, 413 to 434, 435 to 456, 457 to 478, 479 to 500, 501 to 522, 523 to 544, 545 to 566, 567 to 588, 589 to 610, 611 to 632, 633 to 653, 657 to 678, 685 to 707, 708 to 729, 730 to 751, and 752 to 773; these read AISQ…EGLQ, NLTS…KDLV, NLVS…EDLV, NLQE…ASLP, VLKE…NPAG, ELET…AKLP, KLKN…NGAT, KLQL…SGLS, ELEM…KNLP, NLVN…NNLP, KLQT…TDLP, QLKT…DNLP, KLEK…TDLP, RLSY…KKLP, LLEW…TNFP, SLNY…TELP, SLKE…HDMP, NLRK…DNLP, KLQS…HDLP, SLET…DNLP, DLTY…GDLP, NLET…GTMD, KLRI…GNLS, NLTE…STLS, RLIY…SNLT, NLQE…SDLE, and NLNK…ANMV. The region spanning 785–872 is the LRRCT domain; it reads TYTLPTVLSY…SAAKVTADAE (88 aa). 3 MucBP domains span residues 1510–1569, 1575–1634, and 1644–1705; these read DAAA…EQTV, AIKP…PQTI, and SKKS…SQTV. Positions 1716–1742 are disordered; it reads SKDDPKVKGKTNQPSSTDTKLKVDNNS. Over residues 1725–1742 the composition is skewed to polar residues; sequence KTNQPSSTDTKLKVDNNS. The LPXTG sorting signal motif lies at 1743–1747; the sequence is LPATG. Threonine 1746 is subject to Pentaglycyl murein peptidoglycan amidated threonine. A propeptide spans 1747 to 1778 (removed by sortase); that stretch reads GDTENMILAVLIGFNMLIVASIFLFRKPKTNQ.

It belongs to the internalin family.

It is found in the secreted. It localises to the cell wall. Functionally, a role in virulence could not be demonstrated. This Listeria monocytogenes serovar 1/2a (strain ATCC BAA-679 / EGD-e) protein is Internalin I (inlI).